The following is a 292-amino-acid chain: 4-hydroxy-tetrahydrodipicolinate synthase (292 aa).

Pyruvate is bound at residue Thr44. Tyr132 acts as the Proton donor/acceptor in catalysis. Lys160 serves as the catalytic Schiff-base intermediate with substrate. Position 202 (Ile202) interacts with pyruvate.

Belongs to the DapA family. In terms of assembly, homotetramer; dimer of dimers.

It is found in the cytoplasm. It catalyses the reaction L-aspartate 4-semialdehyde + pyruvate = (2S,4S)-4-hydroxy-2,3,4,5-tetrahydrodipicolinate + H2O + H(+). It participates in amino-acid biosynthesis; L-lysine biosynthesis via DAP pathway; (S)-tetrahydrodipicolinate from L-aspartate: step 3/4. Functionally, catalyzes the condensation of (S)-aspartate-beta-semialdehyde [(S)-ASA] and pyruvate to 4-hydroxy-tetrahydrodipicolinate (HTPA). This is 4-hydroxy-tetrahydrodipicolinate synthase from Magnetococcus marinus (strain ATCC BAA-1437 / JCM 17883 / MC-1).